The chain runs to 408 residues: Probable acyl-CoA dehydrogenase 6 (408 aa).

The active-site Proton acceptor is the Glu-265.

It belongs to the acyl-CoA dehydrogenase family. In terms of assembly, homotetramer. The cofactor is FAD.

It carries out the reaction 3-methylbutanoyl-CoA + oxidized [electron-transfer flavoprotein] + H(+) = 3-methylbut-2-enoyl-CoA + reduced [electron-transfer flavoprotein]. Its pathway is amino-acid degradation; L-leucine degradation; (S)-3-hydroxy-3-methylglutaryl-CoA from 3-isovaleryl-CoA: step 1/3. The protein is Probable acyl-CoA dehydrogenase 6 (acdh-6) of Caenorhabditis elegans.